The sequence spans 235 residues: Eukaryotic translation initiation factor 4E-1 (235 aa).

The interval 1–52 (MVVEDSMKATSAEDLSNSIANQNPRGRGGDEDEELEEGEIVGDDDLDSSNLS) is disordered. A compositionally biased stretch (polar residues) spans 13–24 (EDLSNSIANQNP). Residues 30–47 (DEDEELEEGEIVGDDDLD) are compositionally biased toward acidic residues. EIF4G-binding stretches follow at residues 60-63 (HPLE) and 70-106 (FDNP…NNIH). Residues 78-83 (KQATWG), Lys-110, and 128-129 (WE) each bind mRNA. An intrachain disulfide couples Cys-133 to Cys-171. The segment at 154 to 163 (YTLLAMIGEQ) is EIF4G-binding. Residues 178–183 (RSGQDK) and 223–227 (KKFDR) contribute to the mRNA site.

This sequence belongs to the eukaryotic initiation factor 4E family. EIF4F is a multi-subunit complex, the composition of which varies with external and internal environmental conditions. It is composed of at least EIF4A, EIF4E and EIF4G. EIF4E is also known to interact with other partners. Interacts directly with eIF4G. In higher plants two isoforms of EIF4F have been identified, named isoform EIF4F and isoform EIF(iso)4F. Isoform EIF4F has subunits p220 and p26, whereas isoform EIF(iso)4F has subunits p82 and p28. As to quaternary structure, (Microbial infection) Interacts with potyvirus viral genome-linked protein (VPg); this interaction is possible in susceptible hosts but impaired in resistant plants. According to the redox status, the Cys-133-Cys-171 disulfide bridge may have a role in regulating protein function by affecting its ability to bind capped mRNA.

Its subcellular location is the nucleus. The protein localises to the cytoplasm. Component of the protein complex eIF4F, which is involved in the recognition of the mRNA cap, ATP-dependent unwinding of 5'-terminal secondary structure and recruitment of mRNA to the ribosome. Recognizes and binds the 7-methylguanosine-containing mRNA cap during an early step in the initiation of protein synthesis and facilitates ribosome binding by inducing the unwinding of the mRNAs secondary structures. Key component of recessive resistance to potyviruses and Tombusviridae genus Carmovirus such as melon necrotic spot virus (MNSV). In terms of biological role, (Microbial infection) Susceptibility host factor required for viral infection by recruiting viral RNAs, including uncapped and non-polyadenylated RNA, to the host ribosomal complex via an interaction with viral genome-linked protein (VPg). The sequence is that of Eukaryotic translation initiation factor 4E-1 from Cucumis melo (Muskmelon).